The following is a 540-amino-acid chain: Putative cysteine ligase BshC (540 aa).

Residues 425–453 (IEKVEGMIEQQRRLNKDLLDEVAGNQNNI) adopt a coiled-coil conformation.

The protein belongs to the BshC family.

Functionally, involved in bacillithiol (BSH) biosynthesis. May catalyze the last step of the pathway, the addition of cysteine to glucosamine malate (GlcN-Mal) to generate BSH. The polypeptide is Putative cysteine ligase BshC (Staphylococcus aureus (strain NCTC 8325 / PS 47)).